The chain runs to 109 residues: MTPRSLPRYGNSSRRKSFPMHRPSNVATATRKKSSIGWVLLACSVAGCKGIDTTEFILGRAGAFELAVRAAQHRHRYLTMVNVGRAPPRRCRTVCMAATDTPRNIRLNG.

Residues 1 to 26 are disordered; sequence MTPRSLPRYGNSSRRKSFPMHRPSNV.

This is an uncharacterized protein from Mycobacterium bovis (strain ATCC BAA-935 / AF2122/97).